Consider the following 464-residue polypeptide: UDP-N-acetylmuramoylalanine--D-glutamate ligase (464 aa).

Gly-112–Thr-118 is a binding site for ATP.

Belongs to the MurCDEF family.

Its subcellular location is the cytoplasm. The catalysed reaction is UDP-N-acetyl-alpha-D-muramoyl-L-alanine + D-glutamate + ATP = UDP-N-acetyl-alpha-D-muramoyl-L-alanyl-D-glutamate + ADP + phosphate + H(+). It participates in cell wall biogenesis; peptidoglycan biosynthesis. Functionally, cell wall formation. Catalyzes the addition of glutamate to the nucleotide precursor UDP-N-acetylmuramoyl-L-alanine (UMA). In Pelodictyon phaeoclathratiforme (strain DSM 5477 / BU-1), this protein is UDP-N-acetylmuramoylalanine--D-glutamate ligase.